The chain runs to 429 residues: Glutamate-1-semialdehyde 2,1-aminomutase 2 (429 aa).

Lys268 carries the N6-(pyridoxal phosphate)lysine modification.

This sequence belongs to the class-III pyridoxal-phosphate-dependent aminotransferase family. HemL subfamily. As to quaternary structure, homodimer. Pyridoxal 5'-phosphate is required as a cofactor.

The protein resides in the cytoplasm. It carries out the reaction (S)-4-amino-5-oxopentanoate = 5-aminolevulinate. Its pathway is porphyrin-containing compound metabolism; protoporphyrin-IX biosynthesis; 5-aminolevulinate from L-glutamyl-tRNA(Glu): step 2/2. In Bacillus mycoides (strain KBAB4) (Bacillus weihenstephanensis), this protein is Glutamate-1-semialdehyde 2,1-aminomutase 2.